Reading from the N-terminus, the 1452-residue chain is Receptor-type tyrosine-protein phosphatase mu (1452 aa).

The signal sequence occupies residues 1–20; that stretch reads MRGLGTCLATLAGLLLTAAG. Residues 21–742 lie on the Extracellular side of the membrane; that stretch reads ETFSGGCLFD…PEKQTDHTVK (722 aa). An MAM domain is found at 22–184; the sequence is TFSGGCLFDE…VKVLGHPCTR (163 aa). Cysteine 27 and cysteine 36 are disulfide-bonded. Asparagine 72, asparagine 92, asparagine 131, and asparagine 249 each carry an N-linked (GlcNAc...) asparagine glycan. 2 disulfides stabilise this stretch: cysteine 96–cysteine 182 and cysteine 206–cysteine 260. An Ig-like C2-type domain is found at 186–277; sequence PHFLRIQNVE…VGISNYAELV (92 aa). Fibronectin type-III domains lie at 284–379, 382–480, 482–587, and 589–671; these read PIAP…CADP, GPRK…TDED, PGAV…SAPS, and PAYE…DSLQ. 8 N-linked (GlcNAc...) asparagine glycosylation sites follow: asparagine 406, asparagine 414, asparagine 454, asparagine 534, asparagine 544, asparagine 598, asparagine 651, and asparagine 681. A helical membrane pass occupies residues 743-764; the sequence is IAGVIAGILLFVIIFLGVVLVM. Over 765–1452 the chain is Cytoplasmic; the sequence is KKRKLAKKRK…EVALEYLNSG (688 aa). Serine 821 carries the post-translational modification Phosphoserine. Tyrosine-protein phosphatase domains lie at 900–1154 and 1186–1448; these read FKEE…ILEA and IKEE…ALEY. Substrate is bound by residues aspartate 1063, 1095–1101, and glutamine 1139; that span reads CSAGAGR. Cysteine 1095 serves as the catalytic Phosphocysteine intermediate. Cysteine 1389 (phosphocysteine intermediate) is an active-site residue.

The protein belongs to the protein-tyrosine phosphatase family. Receptor class 2B subfamily. As to quaternary structure, homodimer.

The protein resides in the cell membrane. It catalyses the reaction O-phospho-L-tyrosyl-[protein] + H2O = L-tyrosyl-[protein] + phosphate. Functionally, receptor protein-tyrosine phosphatase that mediates homotypic cell-cell interactions and plays a role in adipogenic differentiation via modulation of p120 catenin/CTNND1 phosphorylation. Promotes CTNND1 dephosphorylation and prevents its cytoplasmic localization where it inhibits SLC2A4 membrane trafficking. In turn, SLC2A4 is directed to the plasma membrane and performs its glucose transporter function. In Homo sapiens (Human), this protein is Receptor-type tyrosine-protein phosphatase mu (PTPRM).